We begin with the raw amino-acid sequence, 337 residues long: GDP-fucose transporter, Golgi (337 aa).

Helical transmembrane passes span 13–35 (NKYL…TVFV), 45–67 (VNLG…ICFV), 95–117 (ILPL…SYVT), 121–140 (YYIG…YVIL), 145–163 (SFKC…WLGV), 173–192 (SWRG…MFSI), 205–227 (VWLL…IIIN), and 242–264 (SWFW…VTAL).

The protein belongs to the TPT transporter family. SLC35C subfamily.

It is found in the golgi apparatus membrane. Involved in GDP-fucose import from the cytoplasm into the Golgi lumen. Plays a major role in the fucosylation of N-glycans. Functions redundantly with Efr in the O-fucosylation of Notch, positively regulating Notch signaling. The protein is GDP-fucose transporter, Golgi of Drosophila melanogaster (Fruit fly).